Here is a 424-residue protein sequence, read N- to C-terminus: UDP-N-acetylglucosamine 1-carboxyvinyltransferase (424 aa).

Phosphoenolpyruvate is bound at residue 22–23 (KN). A UDP-N-acetyl-alpha-D-glucosamine-binding site is contributed by R93. The Proton donor role is filled by C117. C117 carries the post-translational modification 2-(S-cysteinyl)pyruvic acid O-phosphothioketal. Residues 122–126 (RPIDL), D307, and I329 each bind UDP-N-acetyl-alpha-D-glucosamine.

This sequence belongs to the EPSP synthase family. MurA subfamily.

The protein localises to the cytoplasm. The enzyme catalyses phosphoenolpyruvate + UDP-N-acetyl-alpha-D-glucosamine = UDP-N-acetyl-3-O-(1-carboxyvinyl)-alpha-D-glucosamine + phosphate. It functions in the pathway cell wall biogenesis; peptidoglycan biosynthesis. In terms of biological role, cell wall formation. Adds enolpyruvyl to UDP-N-acetylglucosamine. The polypeptide is UDP-N-acetylglucosamine 1-carboxyvinyltransferase (Chlorobium phaeovibrioides (strain DSM 265 / 1930) (Prosthecochloris vibrioformis (strain DSM 265))).